The sequence spans 288 residues: MQQITLSKPVSCYGIGVHSGKRTQLTIEPAKENTGIIFIRTDISSENNYIEAKYFNVSDTLLSTTISNSNKIQVSTIEHIMAALWGCGIDNAVIKIDGPEVPIMDGSSKPFVFMIECAGKKLQNAPKKYLKILKEVTATHKDCELTCTPSDHMKIDLTIDFNSKAIGRQNLVFSKQESFNNNIADARTFGFTKDGDYLQSKGLALGVSFENTIAIDDQDKVLNPDGLRYQDEFVRHKLLDLFGDLYTSGNNIVSSINGYKTSHALNNELLQRIFSDNTSHKFVTASEI.

Residues histidine 79, histidine 236, and aspartate 240 each coordinate Zn(2+). The Proton donor role is filled by histidine 263.

Belongs to the LpxC family. Requires Zn(2+) as cofactor.

It carries out the reaction a UDP-3-O-[(3R)-3-hydroxyacyl]-N-acetyl-alpha-D-glucosamine + H2O = a UDP-3-O-[(3R)-3-hydroxyacyl]-alpha-D-glucosamine + acetate. The protein operates within glycolipid biosynthesis; lipid IV(A) biosynthesis; lipid IV(A) from (3R)-3-hydroxytetradecanoyl-[acyl-carrier-protein] and UDP-N-acetyl-alpha-D-glucosamine: step 2/6. In terms of biological role, catalyzes the hydrolysis of UDP-3-O-myristoyl-N-acetylglucosamine to form UDP-3-O-myristoylglucosamine and acetate, the committed step in lipid A biosynthesis. The polypeptide is UDP-3-O-acyl-N-acetylglucosamine deacetylase (Rickettsia bellii (strain OSU 85-389)).